We begin with the raw amino-acid sequence, 508 residues long: Photosystem II CP47 reaction center protein (508 aa).

6 helical membrane-spanning segments follow: residues 21-36 (SVHI…WAGS), 101-115 (IVFS…IWHW), 140-156 (GIHL…FGAF), 203-218 (IAAG…FHLS), 237-252 (VLSS…AFVV), and 457-472 (SFAL…HGSR).

The protein belongs to the PsbB/PsbC family. PsbB subfamily. In terms of assembly, PSII is composed of 1 copy each of membrane proteins PsbA, PsbB, PsbC, PsbD, PsbE, PsbF, PsbH, PsbI, PsbJ, PsbK, PsbL, PsbM, PsbT, PsbX, PsbY, PsbZ, Psb30/Ycf12, at least 3 peripheral proteins of the oxygen-evolving complex and a large number of cofactors. It forms dimeric complexes. Binds multiple chlorophylls. PSII binds additional chlorophylls, carotenoids and specific lipids. is required as a cofactor.

Its subcellular location is the plastid. The protein resides in the chloroplast thylakoid membrane. Its function is as follows. One of the components of the core complex of photosystem II (PSII). It binds chlorophyll and helps catalyze the primary light-induced photochemical processes of PSII. PSII is a light-driven water:plastoquinone oxidoreductase, using light energy to abstract electrons from H(2)O, generating O(2) and a proton gradient subsequently used for ATP formation. In Lobularia maritima (Sweet alyssum), this protein is Photosystem II CP47 reaction center protein.